The following is a 483-amino-acid chain: Regulatory protein ViaA (483 aa).

This sequence belongs to the ViaA family. As to quaternary structure, homodimer. Interacts with RavA.

It localises to the cytoplasm. In terms of biological role, component of the RavA-ViaA chaperone complex, which may act on the membrane to optimize the function of some of the respiratory chains. ViaA stimulates the ATPase activity of RavA. This chain is Regulatory protein ViaA, found in Salmonella arizonae (strain ATCC BAA-731 / CDC346-86 / RSK2980).